A 193-amino-acid chain; its full sequence is PBAN-type neuropeptides (193 aa).

An N-terminal signal peptide occupies residues 1–19 (MYGAVLPGLFFIFISCVVA). Isoleucine amide is present on Ile-46. Leucine amide is present on residues Leu-102 and Leu-122. The tract at residues 124-158 (RRLADDTPATPADQEMYRPDPEQIDSRTKYFSPRL) is disordered. Positions 138-151 (EMYRPDPEQIDSRT) are enriched in basic and acidic residues. Leu-158 and Leu-168 each carry leucine amide. Residues 186–193 (STNKTQST) constitute a propeptide that is removed on maturation.

This sequence belongs to the pyrokinin family. Expressed in the mandibular, maxillary and labial neuromeres of the male and female brain-subesophageal ganglions, in the corpora cardiaca and all around the corpora allata, and at a lower level in the brain near the calyx and pedunculus of the mushroom body (at protein level). Expressed in larvae and adult of both sexes (at protein level). In terms of tissue distribution, expressed in corpora cardiaca (CC), corpora allata (CA) and gnathal ganglion (GNG) (at protein level). Expression in CC and CA detected in most animals, in GNG in some (at protein level). As to expression, expression not detected in CC, CA, AL or GNG (at protein level). Expressed in corpora cardiaca (CC), corpora allata (CA), antennal lobe (AL) and gnathal ganglion (GNG) (at protein level). Expression in CC, CA and GNG detected in most animals, expression in AL detected in few (at protein level). In terms of tissue distribution, expressed in corpora cardiaca (CC), corpora allata (CA), antennal lobe (AL) and gnathal ganglion (GNG) (at protein level). Expression in CC, CA and GNG detected in all animals, expression in AL detected in some (at protein level). As to expression, expressed in corpora cardiaca (CC), corpora allata (CA), antennal lobe (AL) and gnathal ganglion (GNG) (at protein level). Expression in CC, CA and GNG detected in most animals, expression in AL detected in some animals (at protein level).

Its subcellular location is the secreted. In terms of biological role, a hormone that controls sex pheromone production in female moths and pheromone responsiveness in male. This is PBAN-type neuropeptides from Agrotis ipsilon (Black cutworm moth).